Reading from the N-terminus, the 427-residue chain is Trigger factor (427 aa).

The PPIase FKBP-type domain occupies 163 to 248; the sequence is GDTVVIDFVG…IHEVKAKEVP (86 aa).

It belongs to the FKBP-type PPIase family. Tig subfamily.

It localises to the cytoplasm. The enzyme catalyses [protein]-peptidylproline (omega=180) = [protein]-peptidylproline (omega=0). Functionally, involved in protein export. Acts as a chaperone by maintaining the newly synthesized protein in an open conformation. Functions as a peptidyl-prolyl cis-trans isomerase. The polypeptide is Trigger factor (Streptococcus suis (strain 98HAH33)).